A 3898-amino-acid polypeptide reads, in one-letter code: Genome polyprotein (3898 aa).

The region spanning 1 to 168 (MELITNELLY…LDCPLWVTSC (168 aa)) is the Peptidase C53 domain. Disordered regions lie at residues 47 to 72 (LPHK…CRSG), 172 to 209 (KEEG…KPPD), and 223 to 245 (KKGK…KPPE). Active-site for N-terminal protease activity residues include histidine 49 and cysteine 69. Residues 172-207 (KEEGATKKKQQKPDRLEKGRMKIVPKESEKDSKTKP) show a composition bias toward basic and acidic residues. Residues asparagine 272, asparagine 281, asparagine 296, and asparagine 335 are each glycosylated (N-linked (GlcNAc...) asparagine; by host). Disulfide bonds link cysteine 308/cysteine 352 and cysteine 338/cysteine 339. Catalysis depends on for E(rns) glycoprotein RNase activity residues histidine 344, glutamate 345, lysine 348, and histidine 349. Residues asparagine 365 and asparagine 370 are each glycosylated (N-linked (GlcNAc...) asparagine; by host). Disulfide bonds link cysteine 380-cysteine 425 and cysteine 384-cysteine 408. 3 N-linked (GlcNAc...) asparagine; by host glycosylation sites follow: asparagine 413, asparagine 487, and asparagine 597. Topologically, residues 498 to 666 (ASPYCDVDRK…WNAATTTAFL (169 aa)) are lumenal. Residues 667 to 687 (VCLIKMVRGQVVQGILWLLLI) traverse the membrane as a helical segment. At 688 to 1035 (TGVQGHLDCK…DHHRDYFAES (348 aa)) the chain is on the lumenal side. 2 disulfides stabilise this stretch: cysteine 696–cysteine 740 and cysteine 751–cysteine 798. 4 N-linked (GlcNAc...) asparagine; by host glycosylation sites follow: asparagine 809, asparagine 878, asparagine 922, and asparagine 990. The next 8 membrane-spanning stretches (helical) occupy residues 1036 to 1056 (ILVV…LVTY), 1079 to 1099 (NLLT…YLLL), 1108 to 1128 (VLLL…VILL), 1144 to 1164 (LGQI…LIIA), 1189 to 1209 (PGVD…SYVT), 1217 to 1237 (WLQC…LIHL), 1247 to 1267 (IPNW…TVVT), and 1281 to 1301 (VPIL…ILIL). N-linked (GlcNAc...) asparagine; by host glycosylation occurs at asparagine 1357. The chain crosses the membrane as a helical span at residues 1360 to 1380 (MLLPLVRATLISCVSSKWQLI). A glycan (N-linked (GlcNAc...) asparagine; by host) is linked at asparagine 1419. Residues 1441–1589 (RNLIIKHKVR…DLEHLGWILR (149 aa)) form the Peptidase C74 domain. Histidine 1447 functions as the For cysteine protease NS2 activity in the catalytic mechanism. N-linked (GlcNAc...) asparagine; by host glycosylation occurs at asparagine 1451. Residues glutamate 1461 and cysteine 1512 each act as for cysteine protease NS2 activity in the active site. The helical transmembrane segment at 1568-1588 (MLMVGNLGEEVGDLEHLGWIL) threads the bilayer. The 174-residue stretch at 1590 to 1763 (GPAVCKKITE…LPIFEASSGR (174 aa)) folds into the Peptidase S31 domain. Catalysis depends on charge relay system; for serine protease NS3 activity residues histidine 1658 and aspartate 1695. The N-linked (GlcNAc...) asparagine; by host glycan is linked to asparagine 1713. Serine 1752 serves as the catalytic Charge relay system; for serine protease NS3 activity. The Helicase ATP-binding domain maps to 1802-1960 (ITSMNRGDFK…QKHPIEEFIA (159 aa)). 1815 to 1822 (LATGAGKT) is an ATP binding site. A DEAH box motif is present at residues 1910–1913 (DEYH). The Helicase C-terminal domain maps to 1978–2143 (GLKIPVDEMK…NVTKSFREMN (166 aa)). N-linked (GlcNAc...) asparagine; by host glycosylation is found at asparagine 2134, asparagine 2217, asparagine 2494, asparagine 2682, asparagine 2751, asparagine 2891, and asparagine 2988. Threonine 3499 and leucine 3501 together coordinate GTP. A RdRp catalytic domain is found at 3518–3641 (PVAVSFDTKA…ITEKGLGLKF (124 aa)). N-linked (GlcNAc...) asparagine; by host glycosylation is present at asparagine 3688. GTP is bound by residues arginine 3696 and lysine 3704. N-linked (GlcNAc...) asparagine; by host glycosylation is found at asparagine 3777 and asparagine 3793.

The protein belongs to the pestivirus polyprotein family. In terms of assembly, homodimer; disulfide-linked. Homodimer; disulfide-linked. Heterodimer with E1; disulfide-linked. As to quaternary structure, interacts with host IFIH1/MDA5; this interaction is involved in the inhibition of IFN-beta production. Post-translationally, heavily glycosylated. The viral RNA of pestiviruses is expressed as a single polyprotein which undergoes post-translational proteolytic processing resulting in the production of at least eleven individual proteins. The N-terminal protease cleaves itself from the nascent polyprotein autocatalytically and thereby generates the N-terminus of the adjacent viral capsid protein C. In terms of processing, cleavage between E2 and p7 is partial.

It localises to the virion. It is found in the host membrane. The protein localises to the virion membrane. Its subcellular location is the host endoplasmic reticulum membrane. The protein resides in the host cytoplasm. The catalysed reaction is Leu is conserved at position P1 for all four cleavage sites. Alanine is found at position P1' of the NS4A-NS4B cleavage site, whereas serine is found at position P1' of the NS3-NS4A, NS4B-NS5A and NS5A-NS5B cleavage sites.. It catalyses the reaction RNA(n) + a ribonucleoside 5'-triphosphate = RNA(n+1) + diphosphate. It carries out the reaction a ribonucleoside 5'-triphosphate + H2O = a ribonucleoside 5'-diphosphate + phosphate + H(+). The enzyme catalyses ATP + H2O = ADP + phosphate + H(+). The catalysed reaction is a ribonucleotidyl-ribonucleotide-RNA + H2O = a 3'-end 3'-phospho-ribonucleotide-RNA + a 5'-end dephospho-ribonucleoside-RNA + H(+). It catalyses the reaction a ribonucleotidyl-ribonucleotide-RNA = a 3'-end 2',3'-cyclophospho-ribonucleotide-RNA + a 5'-end dephospho-ribonucleoside-RNA. It carries out the reaction a 3'-end 2',3'-cyclophospho-ribonucleotide-RNA + H2O = a 3'-end 3'-phospho-ribonucleotide-RNA + H(+). With respect to regulation, inhibited by Zn(2+), which binds the catalytic site. In terms of biological role, leader cysteine autoprotease that cleaves itself from the nascent polyprotein during translation of the viral mRNA. Once released, plays a role in the inhibition of host innate immune response by interacting with host IRF3 and inducing its proteasomal degradation. Packages viral RNA to form a viral nucleocapsid and thereby protects viral RNA. Also plays a role in transcription regulation. Protects the incoming virus against IFN-induced effectors. Its function is as follows. Initial binding to target cell probably involves interaction of E(rns) with glycosaminoglycans. Also possesses intrinsic ribonuclease (RNase) activity that can inhibit the production of type I interferon and assist in the development of persistent infections. Functionally, E1 and/or E2 are probably responsible of cell attachment with CD46 and subsequent fusion after internalization of the virion by endocytosis. In terms of biological role, E1 and/or E2 are probably responsible of cell attachment with CD46 and subsequent fusion after internalization of the virion by endocytosis. Probably functions as a coeffector of fusion providing structural integrity to the fusion complex and possibly controlling exposure of the fusion motif in E1. Plays an essential role in the virus replication cycle by acting as a viroporin. Forms ion conductive pores, which alters the cell permeability allowing the transport of ions and other small molecules. Forms a leader sequence to properly orient NS2 in the membrane. Its function is as follows. Uncleaved NS2-3 is required for production of infectious virus. Functionally, plays a role in the regulation of viral RNA replication. In terms of biological role, multifunctional protein that contains an N-terminal protease and a C-terminal helicase, playing essential roles in viral polyprotein processing and viral genome replication. The chymotrypsin-like serine protease activity utilizes NS4A as an essential cofactor and catalyzes the cleavage of the polyprotein leading to the release of NS4A, NS4B, NS5A, and NS5B. Interacts with NS5B to enhance RNA-dependent RNA polymerase activity. Acts as a cofactor for the NS3 protease activity. Its function is as follows. Induces a specific membrane alteration that serves as a scaffold for the virus replication complex. Plays a role in the inhibition of host innate immune response by inhibiting RIGI/IFIH1-mediated IFN-beta production. Functionally, replicates the viral (+) and (-) genome. Initiates the primer-independent RNA replication via a de novo mechanism requiring GTP. The sequence is that of Genome polyprotein from Bos taurus (Bovine).